The sequence spans 309 residues: Pyridoxal 5'-phosphate synthase subunit PDX1.1 (309 aa).

Met-1 carries the N-acetylmethionine modification. Asp-41 contacts D-ribose 5-phosphate. The active-site Schiff-base intermediate with D-ribose 5-phosphate is Lys-98. A D-ribose 5-phosphate-binding site is contributed by Gly-170. Position 182 (Arg-182) interacts with D-glyceraldehyde 3-phosphate. D-ribose 5-phosphate-binding positions include Gly-231 and 252–253 (GS).

Belongs to the PdxS/SNZ family. Homodimer or heterodimer with PDX1.2 or PDX1.3. Interacts with PDX2. In terms of tissue distribution, expressed in flowers, shoots, leaves and weakly in roots.

It localises to the cytoplasm. It carries out the reaction aldehydo-D-ribose 5-phosphate + D-glyceraldehyde 3-phosphate + L-glutamine = pyridoxal 5'-phosphate + L-glutamate + phosphate + 3 H2O + H(+). Its pathway is cofactor biosynthesis; pyridoxal 5'-phosphate biosynthesis. Catalyzes the formation of pyridoxal 5'-phosphate from ribose 5-phosphate (RBP), glyceraldehyde 3-phosphate (G3P) and ammonia. The ammonia is provided by PDX2. Can also use ribulose 5-phosphate and dihydroxyacetone phosphate as substrates, resulting from enzyme-catalyzed isomerization of RBP and G3P, respectively. Also plays an indirect role in resistance to singlet oxygen-generating photosensitizers. In Arabidopsis thaliana (Mouse-ear cress), this protein is Pyridoxal 5'-phosphate synthase subunit PDX1.1 (PDX11).